The primary structure comprises 987 residues: Voltage-gated delayed rectifier potassium channel KCNH1 (987 aa).

Topologically, residues 1–220 are cytoplasmic; the sequence is MTMAGGRKGL…LHYCVFKTTW (220 aa). Positions 14–94 constitute a PAS domain; it reads QNTFLENIVR…QTFENYEMNS (81 aa). Residues 93–145 form the PAC domain; it reads NSFEILMYKKNRTPVWFFVKIAPIRNEQDKVVLFLCTFSDITAFKQPIEDDSC. Positions 151-162 are required for phosphatidylinositol bisphosphate binding; the sequence is FARLTRALTSSR. A helical membrane pass occupies residues 221–241; that stretch reads DWIILILTFYTAILVPYNVSF. Residues 242–248 are Extracellular-facing; the sequence is KTRQNNV. A helical membrane pass occupies residues 249–269; that stretch reads AWLVVDSIVDVIFLVDIVLNF. At 270 to 290 the chain is on the cytoplasmic side; sequence HTTFVGPAGEVISDPKLIRMN. Residues 291-309 traverse the membrane as a helical segment; it reads YLKTWFVIDLLSCLPYDVI. The Extracellular portion of the chain corresponds to 310–345; it reads NAFENVDEVSAFMGDPGKIGFADQIPPPLEGRESQG. Residues 346-368 form a helical; Voltage-sensor membrane-spanning segment; that stretch reads ISSLFSSLKVVRLLRLGRVARKL. The Cytoplasmic segment spans residues 369 to 377; the sequence is DHYIEYGAA. Residues 378 to 399 traverse the membrane as a helical segment; it reads VLVLLVCVFGLAAHWMACIWYS. Topologically, residues 400–448 are extracellular; it reads IGDYEIFDEDTKTIRNNSWLYQLAMDIGTPYQFNGSGSGKWEGGPSKNS. N-linked (GlcNAc...) asparagine glycosylation is found at N415 and N433. Positions 449–470 form an intramembrane region, pore-forming; that stretch reads VYISSLYFTMTSLTSVGFGNIA. Positions 463–468 match the Selectivity filter motif; it reads SVGFGN. Over 471-477 the chain is Extracellular; the sequence is PSTDIEK. The chain crosses the membrane as a helical span at residues 478–498; sequence IFAVAIMMIGSLLYATIFGNV. At 499–987 the chain is on the cytoplasmic side; it reads TTIFQQMYAN…ESERDIFGAS (489 aa). The segment at 673-770 is calmodulin-binding; that stretch reads KRDALQKVLE…LDDLDVEKGS (98 aa). The interaction with cyclic nucleotide-binding pocket stretch occupies residues 699–701; the sequence is YNL. The CAD (involved in subunit assembly) stretch occupies residues 922 to 962; the sequence is AAVLEVKHELKEDIKALSTKMTSIEKQLSEILRILTSRRSS. A disordered region spans residues 960 to 987; the sequence is RSSQSPQELFEISRPQSPESERDIFGAS. Phosphoserine occurs at positions 972, 976, and 979. Residues 978 to 987 are compositionally biased toward basic and acidic residues; the sequence is ESERDIFGAS.

The protein belongs to the potassium channel family. H (Eag) (TC 1.A.1.20) subfamily. Kv10.1/KCNH1 sub-subfamily. As to quaternary structure, homomultimer. The potassium channel is composed of a homo- or heterotetrameric complex of pore-forming alpha subunits that can associate with modulating beta subunits. Heteromultimer with KCNH5/EAG2. Interacts with ALG10B. Interacts with RABEP1. Interacts (via C-terminus) with CTTN. Interacts (via C-terminal cytoplasmic region) with Ca(2+)-bound calmodulin. Post-translationally, channel activity is regulated via tyrosine phosphorylation/dephosphorylation by SRC and PTPN6. As to expression, detected in cerebellum, cortex and retina.

It localises to the cell membrane. Its subcellular location is the nucleus inner membrane. It is found in the cell projection. The protein localises to the dendrite. The protein resides in the axon. It localises to the presynaptic cell membrane. Its subcellular location is the perikaryon. It is found in the postsynaptic density membrane. The protein localises to the early endosome membrane. The enzyme catalyses K(+)(in) = K(+)(out). With respect to regulation, channel activity is inhibited by interaction with Ca(2+)-bound calmodulin. Interaction of a single pore-forming alpha subunit with a calmodulin chain is sufficient to promote channel closure. Extracellular magnesium ion concentrations up to 4 mM modulate channel activity by slowing down current activation in a reversible fashion. Channel activity is not regulated by cyclic nucleotides. Channel activity is inhibited by binding intracellular phosphatidylinositol-3,5-bisphosphate and phosphatidylinositol-4,5-bisphosphate (PIP2), but is not inhibited by phosphatidylinositol 4-phosphate. Its function is as follows. Pore-forming (alpha) subunit of a voltage-gated delayed rectifier potassium channel that mediates outward-rectifying potassium currents which, on depolarization, reaches a steady-state level and do not inactivate. The activation kinetics depend on the prepulse potential and external divalent cation concentration. With negative prepulses, the current activation is delayed and slowed down several fold, whereas more positive prepulses speed up activation. The time course of activation is biphasic with a fast and a slowly activating current component. Activates at more positive membrane potentials and exhibit a steeper activation curve. Channel properties are modulated by subunit assembly. Mediates IK(NI) current in myoblasts. Involved in the regulation of cell proliferation and differentiation, in particular adipogenic and osteogenic differentiation in bone marrow-derived mesenchymal stem cells (MSCs). This Bos taurus (Bovine) protein is Voltage-gated delayed rectifier potassium channel KCNH1.